A 684-amino-acid chain; its full sequence is Beta-mannosyltransferase 1 (684 aa).

The Cytoplasmic portion of the chain corresponds to 1–28; it reads MDKFIQSFSHQYLDSSSSLKLTARRKRK. A helical membrane pass occupies residues 29–49; that stretch reads LTILGLFLFSLISLMIIISYS. At 50–684 the chain is on the extracellular side; sequence NNNILPGLSG…KFCKIYGETF (635 aa). Residue Asn297 is glycosylated (N-linked (GlcNAc...) asparagine).

This sequence belongs to the BMT family.

The protein localises to the membrane. Its function is as follows. Beta-mannosyltransferase involved in cell wall biosynthesis. Required for addition of the first beta-mannose residue to acid-stable fraction of cell wall phosphopeptidomannan. Plays a key role in reducing host inflammatory response. This is Beta-mannosyltransferase 1 (BMT1) from Candida albicans (strain SC5314 / ATCC MYA-2876) (Yeast).